Here is a 477-residue protein sequence, read N- to C-terminus: ATP synthase subunit beta (477 aa).

151–158 (GGAGVGKT) is an ATP binding site.

It belongs to the ATPase alpha/beta chains family. In terms of assembly, F-type ATPases have 2 components, CF(1) - the catalytic core - and CF(0) - the membrane proton channel. CF(1) has five subunits: alpha(3), beta(3), gamma(1), delta(1), epsilon(1). CF(0) has three main subunits: a(1), b(2) and c(9-12). The alpha and beta chains form an alternating ring which encloses part of the gamma chain. CF(1) is attached to CF(0) by a central stalk formed by the gamma and epsilon chains, while a peripheral stalk is formed by the delta and b chains.

The protein resides in the cell inner membrane. The catalysed reaction is ATP + H2O + 4 H(+)(in) = ADP + phosphate + 5 H(+)(out). In terms of biological role, produces ATP from ADP in the presence of a proton gradient across the membrane. The catalytic sites are hosted primarily by the beta subunits. This chain is ATP synthase subunit beta, found in Bradyrhizobium diazoefficiens (strain JCM 10833 / BCRC 13528 / IAM 13628 / NBRC 14792 / USDA 110).